A 253-amino-acid chain; its full sequence is Phosphoadenosine 5'-phosphosulfate reductase (253 aa).

Cysteine 239 (nucleophile; cysteine thiosulfonate intermediate) is an active-site residue.

Belongs to the PAPS reductase family. CysH subfamily.

It localises to the cytoplasm. It carries out the reaction [thioredoxin]-disulfide + sulfite + adenosine 3',5'-bisphosphate + 2 H(+) = [thioredoxin]-dithiol + 3'-phosphoadenylyl sulfate. The protein operates within sulfur metabolism; hydrogen sulfide biosynthesis; sulfite from sulfate: step 3/3. In terms of biological role, catalyzes the formation of sulfite from phosphoadenosine 5'-phosphosulfate (PAPS) using thioredoxin as an electron donor. In Photobacterium profundum (strain SS9), this protein is Phosphoadenosine 5'-phosphosulfate reductase.